Reading from the N-terminus, the 219-residue chain is Probable GTP-binding protein EngB (219 aa).

The 175-residue stretch at 31 to 205 (VGVEIAFAGR…LAILNEWCHP (175 aa)) folds into the EngB-type G domain. GTP-binding positions include 39–46 (GRSNAGKS), 66–70 (GRTQL), 84–87 (DLPG), 151–154 (TKSD), and 184–186 (FSS). Mg(2+) is bound by residues serine 46 and threonine 68.

This sequence belongs to the TRAFAC class TrmE-Era-EngA-EngB-Septin-like GTPase superfamily. EngB GTPase family. The cofactor is Mg(2+).

Necessary for normal cell division and for the maintenance of normal septation. This Shewanella baltica (strain OS223) protein is Probable GTP-binding protein EngB.